Reading from the N-terminus, the 102-residue chain is Auxin-responsive protein SAUR68 (102 aa).

It belongs to the ARG7 family.

It is found in the cell membrane. Functionally, may promote auxin-stimulated organ elongation, such as hypocotyls, stamen filaments and petals. The chain is Auxin-responsive protein SAUR68 from Arabidopsis thaliana (Mouse-ear cress).